Reading from the N-terminus, the 348-residue chain is Putative transport protein HI_0338 (348 aa).

9 helical membrane-spanning segments follow: residues 7–27 (LHRT…VKLA), 28–48 (AEIV…SPII), 60–80 (LAIT…VGLI), 139–159 (VLLN…VVIF), 196–216 (VIGY…GVFI), 223–243 (VQYA…PNIG), 245–265 (IIAA…GIGF), 267–287 (VAIG…PKMM), and 296–316 (LVVF…GMLL).

Belongs to the autoinducer-2 exporter (AI-2E) (TC 2.A.86) family.

It is found in the cell membrane. This is Putative transport protein HI_0338 from Haemophilus influenzae (strain ATCC 51907 / DSM 11121 / KW20 / Rd).